A 189-amino-acid chain; its full sequence is Leucine repeat adapter protein 25 (189 aa).

Position 28 is a phosphoserine (S28). The tract at residues 55 to 81 (LSRAARAPDGPRHAAGSANLGSAAGPR) is disordered. Positions 68-79 (AAGSANLGSAAG) are enriched in low complexity. One copy of the LRR repeat lies at 86-114 (LDSALAALRKEMVGLRQLDMSLLCQLWGL). The tract at residues 141 to 174 (DSSYPPDAGLSDDDEPPDASLPPDPPPLTVPQTH) is disordered. The span at 159–169 (ASLPPDPPPLT) shows a compositional bias: pro residues. Residue S188 is modified to Phosphoserine.

Belongs to the FAM89 family. Interacts with SKI. Interacts (via LRR repeat) with CDC42BPA (via AGC-kinase C-terminal domain) and CDC42BPB (via AGC-kinase C-terminal domain). Interacts (via LRR repeat) with LIMK1 (via LIM zinc-binding domains). Forms a tripartite complex with CDC42BPA, CDC42BPB and LIMK1.

The protein resides in the cytoplasm. It is found in the cell projection. It localises to the lamellipodium. Negatively regulates TGF-beta-induced signaling; in cooperation with SKI prevents the translocation of SMAD2 from the nucleus to the cytoplasm in response to TGF-beta. Acts as an adapter that mediates the specific recognition of LIMK1 by CDC42BPA and CDC42BPB in the lamellipodia. LRAP25-mediated CDC42BPA/CDC42BPB targeting to LIMK1 and the lamellipodium results in LIMK1 activation and the subsequent phosphorylation of CFL1 which is important for lamellipodial F-actin regulation. The protein is Leucine repeat adapter protein 25 of Rattus norvegicus (Rat).